We begin with the raw amino-acid sequence, 398 residues long: Ribosomal RNA large subunit methyltransferase F (398 aa).

The span at 1–12 (MTPSRKPARPGA) shows a compositional bias: basic residues. Residues 1–85 (MTPSRKPARP…RNLHGQGYDF (85 aa)) are disordered. 2 stretches are compositionally biased toward low complexity: residues 20-40 (PSAKASRPKPSSQSKSKAQPK) and 48-59 (QAKSQAKPQAKS).

Belongs to the methyltransferase superfamily. METTL16/RlmF family.

It localises to the cytoplasm. The catalysed reaction is adenosine(1618) in 23S rRNA + S-adenosyl-L-methionine = N(6)-methyladenosine(1618) in 23S rRNA + S-adenosyl-L-homocysteine + H(+). In terms of biological role, specifically methylates the adenine in position 1618 of 23S rRNA. This chain is Ribosomal RNA large subunit methyltransferase F, found in Shewanella loihica (strain ATCC BAA-1088 / PV-4).